A 202-amino-acid chain; its full sequence is Large ribosomal subunit protein bL9 (202 aa).

The interval 176-202 (AAGEFFDPDAQHDDEPAAEDDQNAEEK) is disordered. Residues 191–202 (PAAEDDQNAEEK) are compositionally biased toward acidic residues.

This sequence belongs to the bacterial ribosomal protein bL9 family.

Its function is as follows. Binds to the 23S rRNA. This Nitrobacter winogradskyi (strain ATCC 25391 / DSM 10237 / CIP 104748 / NCIMB 11846 / Nb-255) protein is Large ribosomal subunit protein bL9.